Reading from the N-terminus, the 205-residue chain is Large ribosomal subunit protein bL17c (205 aa).

Residues 1 to 89 (MASASTTWSM…VIDNGGRVFA (89 aa)) constitute a chloroplast transit peptide.

Belongs to the bacterial ribosomal protein bL17 family. In terms of assembly, part of the 50S ribosomal subunit.

Its subcellular location is the plastid. It is found in the chloroplast. In terms of biological role, this protein binds directly to 23S ribosomal RNA. The protein is Large ribosomal subunit protein bL17c (RPL17) of Nicotiana tabacum (Common tobacco).